Reading from the N-terminus, the 176-residue chain is Peptide deformylase 1 (176 aa).

Fe cation contacts are provided by cysteine 99 and histidine 141. Residue glutamate 142 is part of the active site. Histidine 145 lines the Fe cation pocket.

It belongs to the polypeptide deformylase family. It depends on Fe(2+) as a cofactor.

It catalyses the reaction N-terminal N-formyl-L-methionyl-[peptide] + H2O = N-terminal L-methionyl-[peptide] + formate. Removes the formyl group from the N-terminal Met of newly synthesized proteins. Requires at least a dipeptide for an efficient rate of reaction. N-terminal L-methionine is a prerequisite for activity but the enzyme has broad specificity at other positions. This is Peptide deformylase 1 from Bordetella pertussis (strain Tohama I / ATCC BAA-589 / NCTC 13251).